The chain runs to 640 residues: Isoniazid-induced protein IniA (640 aa).

The chain crosses the membrane as a helical span at residues 497–519; that stretch reads IGMLSSVVGLGLFNPLSVGAGLI. Positions 560-628 form a coiled coil; the sequence is RDRLKMIQRL…QVNDNLAGLE (69 aa).

As to quaternary structure, forms multimeric structures containing a central pore.

The protein localises to the cell membrane. Its function is as follows. Participates in the development of tolerance to both isoniazid and ethambutol. May function through a MDR-pump like mechanism, although it does not appear to directly transport isoniazid from the cell. This chain is Isoniazid-induced protein IniA (iniA), found in Mycobacterium tuberculosis (strain CDC 1551 / Oshkosh).